The chain runs to 1025 residues: Serine/threonine-protein kinase TAO2 (1025 aa).

The 254-residue stretch at 28–281 folds into the Protein kinase domain; the sequence is FADLREIGHG…SDMLLKHRFL (254 aa). ATP-binding positions include 34 to 42 and Lys-57; that span reads IGHGSFGAV. Asp-151 serves as the catalytic Proton acceptor. Over residues 349–373 the composition is skewed to low complexity; it reads ESSQSVPSMSISASSQSSSVNSLAD. A disordered region spans residues 349 to 377; sequence ESSQSVPSMSISASSQSSSVNSLADASDD. 2 coiled-coil regions span residues 457-650 and 755-876; these read SALR…ECAM and ILKR…EIEA. 2 disordered regions span residues 899–930 and 945–1025; these read FNQG…QNTG and SASW…LSYS. Over residues 905 to 914 the composition is skewed to pro residues; it reads APPPGWPSRP. Over residues 947–986 the composition is skewed to low complexity; that stretch reads SWGLHPPGSSSSLSALPSSSSSSSSSPSSSSGGRPGLLLL. Residues 1007 to 1025 are compositionally biased toward polar residues; it reads SRSTSVTSQLSNGSHLSYS.

The protein belongs to the protein kinase superfamily. STE Ser/Thr protein kinase family. STE20 subfamily. Mg(2+) serves as cofactor.

It carries out the reaction L-seryl-[protein] + ATP = O-phospho-L-seryl-[protein] + ADP + H(+). It catalyses the reaction L-threonyl-[protein] + ATP = O-phospho-L-threonyl-[protein] + ADP + H(+). In terms of biological role, serine/threonine-protein kinase involved in different processes such as apoptotic morphological changes, MAPK8/JNK and MAPK14/p38 MAPK signaling pathway. Activates the JNK MAP kinase pathway. This Xenopus laevis (African clawed frog) protein is Serine/threonine-protein kinase TAO2 (taok2).